Here is a 155-residue protein sequence, read N- to C-terminus: MSRRGTAEEKTPKSDPIYRNRLVNMLVNRIMKHGKKSLAYQIIYRAVKKIQQKTETNPLSVLRQAIRGVTPDIAVKARRVGGSTHQVPIEIGSTQGKALAIRWLLGASRKRPGRNMAFKLSSELVDAAKGSGDAIRKKEETHRMAEANRAFAHFR.

Belongs to the universal ribosomal protein uS7 family. In terms of assembly, part of the 30S ribosomal subunit.

The protein resides in the plastid. It localises to the chloroplast. One of the primary rRNA binding proteins, it binds directly to 16S rRNA where it nucleates assembly of the head domain of the 30S subunit. The sequence is that of Small ribosomal subunit protein uS7c (rps7) from Ananas comosus (Pineapple).